A 244-amino-acid polypeptide reads, in one-letter code: ATP synthase subunit a, chloroplastic (244 aa).

5 consecutive transmembrane segments (helical) span residues 35–55 (QVLITSWVVIAILLGSAAIAV), 92–112 (VPFIGTLFLFIFVSNWSGALL), 131–151 (INTTVALALLTSVAYFYAGIT), 196–216 (LVVVVLVSLVPLVVPIPVMFL), and 217–237 (GLFTSGIQALIFATLAAAYIG).

It belongs to the ATPase A chain family. In terms of assembly, F-type ATPases have 2 components, CF(1) - the catalytic core - and CF(0) - the membrane proton channel. CF(1) has five subunits: alpha(3), beta(3), gamma(1), delta(1), epsilon(1). CF(0) has four main subunits: a, b, b' and c.

It localises to the plastid. The protein resides in the chloroplast thylakoid membrane. Functionally, key component of the proton channel; it plays a direct role in the translocation of protons across the membrane. In Coffea arabica (Arabian coffee), this protein is ATP synthase subunit a, chloroplastic.